Consider the following 147-residue polypeptide: Hemoglobin subunit beta (147 aa).

Residues 3 to 147 (EWTDKERSII…VVSALGKQYH (145 aa)) form the Globin domain. Heme b contacts are provided by H64 and H93.

This sequence belongs to the globin family. As to quaternary structure, heterotetramer of two alpha chains and two beta chains. In terms of tissue distribution, red blood cells.

In terms of biological role, involved in oxygen transport from gills to the various peripheral tissues. This Trematomus hansoni (Striped rockcod) protein is Hemoglobin subunit beta (hbb).